The following is a 214-amino-acid chain: Ribosomal RNA small subunit methyltransferase G (214 aa).

S-adenosyl-L-methionine-binding positions include G77, L82, 128 to 129, and R143; that span reads VE.

The protein belongs to the methyltransferase superfamily. RNA methyltransferase RsmG family.

It is found in the cytoplasm. The enzyme catalyses guanosine(527) in 16S rRNA + S-adenosyl-L-methionine = N(7)-methylguanosine(527) in 16S rRNA + S-adenosyl-L-homocysteine. Its function is as follows. Specifically methylates the N7 position of guanine in position 527 of 16S rRNA. In Nitrosomonas eutropha (strain DSM 101675 / C91 / Nm57), this protein is Ribosomal RNA small subunit methyltransferase G.